The sequence spans 391 residues: Phosphoglycerate kinase (391 aa).

Residues 21–23 (DLN), Arg36, 59–62 (HLGR), Arg113, and Arg146 contribute to the substrate site. Residues Lys197, Glu319, and 345 to 348 (GGDT) each bind ATP.

The protein belongs to the phosphoglycerate kinase family. Monomer.

Its subcellular location is the cytoplasm. It catalyses the reaction (2R)-3-phosphoglycerate + ATP = (2R)-3-phospho-glyceroyl phosphate + ADP. The protein operates within carbohydrate degradation; glycolysis; pyruvate from D-glyceraldehyde 3-phosphate: step 2/5. The protein is Phosphoglycerate kinase of Shewanella frigidimarina (strain NCIMB 400).